Consider the following 160-residue polypeptide: 6,7-dimethyl-8-ribityllumazine synthase (160 aa).

Residues Trp-28, 59 to 61 (ALE), and 81 to 83 (CVI) contribute to the 5-amino-6-(D-ribitylamino)uracil site. A (2S)-2-hydroxy-3-oxobutyl phosphate-binding site is contributed by 86–87 (ET). Catalysis depends on His-89, which acts as the Proton donor. Asn-114 is a 5-amino-6-(D-ribitylamino)uracil binding site. Position 128 (Arg-128) interacts with (2S)-2-hydroxy-3-oxobutyl phosphate.

Belongs to the DMRL synthase family.

The catalysed reaction is (2S)-2-hydroxy-3-oxobutyl phosphate + 5-amino-6-(D-ribitylamino)uracil = 6,7-dimethyl-8-(1-D-ribityl)lumazine + phosphate + 2 H2O + H(+). Its pathway is cofactor biosynthesis; riboflavin biosynthesis; riboflavin from 2-hydroxy-3-oxobutyl phosphate and 5-amino-6-(D-ribitylamino)uracil: step 1/2. Its function is as follows. Catalyzes the formation of 6,7-dimethyl-8-ribityllumazine by condensation of 5-amino-6-(D-ribitylamino)uracil with 3,4-dihydroxy-2-butanone 4-phosphate. This is the penultimate step in the biosynthesis of riboflavin. The chain is 6,7-dimethyl-8-ribityllumazine synthase from Corynebacterium jeikeium (strain K411).